The chain runs to 296 residues: tRNA (guanine(9)-N1)-methyltransferase (296 aa).

A disordered region spans residues 1–33 (MTPETNNDETLSRPKPRAALPPVPEGMSKSQWK). Residues 85–274 (TPRVNVNQKD…SVLPARKLAE (190 aa)) enclose the SAM-dependent MTase TRM10-type domain. S-adenosyl-L-methionine is bound by residues 181–182 (LT), glycine 201, 205–209 (DKNRH), cysteine 213, leucine 227, and 239–241 (KVL). Residue aspartate 205 is the Proton acceptor of the active site. The interval 277-296 (DHAQESNSSSPAEEQDAQDI) is disordered.

The protein belongs to the class IV-like SAM-binding methyltransferase superfamily. TRM10 family. Monomer.

The protein localises to the cytoplasm. Its subcellular location is the nucleus. It catalyses the reaction guanosine(9) in tRNA + S-adenosyl-L-methionine = N(1)-methylguanosine(9) in tRNA + S-adenosyl-L-homocysteine + H(+). Its function is as follows. S-adenosyl-L-methionine-dependent guanine N(1)-methyltransferase that catalyzes the formation of N(1)-methylguanine at position 9 (m1G9) in cytoplasmic tRNA. This Eremothecium gossypii (strain ATCC 10895 / CBS 109.51 / FGSC 9923 / NRRL Y-1056) (Yeast) protein is tRNA (guanine(9)-N1)-methyltransferase.